Here is a 286-residue protein sequence, read N- to C-terminus: 4-diphosphocytidyl-2-C-methyl-D-erythritol kinase (286 aa).

Lysine 13 is a catalytic residue. 101–111 is a binding site for ATP; that stretch reads PQGAGLGGGSS. Aspartate 143 is an active-site residue.

Belongs to the GHMP kinase family. IspE subfamily.

The catalysed reaction is 4-CDP-2-C-methyl-D-erythritol + ATP = 4-CDP-2-C-methyl-D-erythritol 2-phosphate + ADP + H(+). Its pathway is isoprenoid biosynthesis; isopentenyl diphosphate biosynthesis via DXP pathway; isopentenyl diphosphate from 1-deoxy-D-xylulose 5-phosphate: step 3/6. In terms of biological role, catalyzes the phosphorylation of the position 2 hydroxy group of 4-diphosphocytidyl-2C-methyl-D-erythritol. This Idiomarina loihiensis (strain ATCC BAA-735 / DSM 15497 / L2-TR) protein is 4-diphosphocytidyl-2-C-methyl-D-erythritol kinase.